The following is a 274-amino-acid chain: Methionine-binding lipoprotein MetQ (274 aa).

A signal peptide spans 1-19 (MKKLFLGALLLVFAGVMAA). A lipid anchor (N-palmitoyl cysteine) is attached at Cys20. Cys20 is lipidated: S-diacylglycerol cysteine.

The protein belongs to the NlpA lipoprotein family. The complex is composed of two ATP-binding proteins (MetN), two transmembrane proteins (MetP) and a solute-binding protein (metQ).

The protein localises to the cell membrane. Its function is as follows. Part of the ABC transporter complex MetNPQ involved in methionine import. Binds the methionine and transfers it to the membrane-bound permease. It has also been shown to be involved in methionine sulfoxide transport. In Bacillus subtilis (strain 168), this protein is Methionine-binding lipoprotein MetQ (metQ).